Consider the following 462-residue polypeptide: Adenylosuccinate lyase (462 aa).

Residues 21–22 (RY), 87–89 (KHD), and 114–115 (TS) contribute to the N(6)-(1,2-dicarboxyethyl)-AMP site. Catalysis depends on histidine 162, which acts as the Proton donor/acceptor. Glutamine 236 is a N(6)-(1,2-dicarboxyethyl)-AMP binding site. Residue serine 287 is the Proton donor/acceptor of the active site. N(6)-(1,2-dicarboxyethyl)-AMP-binding positions include serine 288, 293–295 (KRN), and 332–336 (SAERC).

Belongs to the lyase 1 family. Adenylosuccinate lyase subfamily. In terms of assembly, homotetramer. Residues from neighboring subunits contribute catalytic and substrate-binding residues to each active site.

The enzyme catalyses N(6)-(1,2-dicarboxyethyl)-AMP = fumarate + AMP. It carries out the reaction (2S)-2-[5-amino-1-(5-phospho-beta-D-ribosyl)imidazole-4-carboxamido]succinate = 5-amino-1-(5-phospho-beta-D-ribosyl)imidazole-4-carboxamide + fumarate. The protein operates within purine metabolism; AMP biosynthesis via de novo pathway; AMP from IMP: step 2/2. It functions in the pathway purine metabolism; IMP biosynthesis via de novo pathway; 5-amino-1-(5-phospho-D-ribosyl)imidazole-4-carboxamide from 5-amino-1-(5-phospho-D-ribosyl)imidazole-4-carboxylate: step 2/2. Functionally, catalyzes two reactions in de novo purine nucleotide biosynthesis. Catalyzes the breakdown of 5-aminoimidazole- (N-succinylocarboxamide) ribotide (SAICAR or 2-[5-amino-1-(5-phospho-beta-D-ribosyl)imidazole-4-carboxamido]succinate) to 5-aminoimidazole-4-carboxamide ribotide (AICAR or 5-amino-1-(5-phospho-beta-D-ribosyl)imidazole-4-carboxamide) and fumarate, and of adenylosuccinate (ADS or N(6)-(1,2-dicarboxyethyl)-AMP) to adenosine monophosphate (AMP) and fumarate. This is Adenylosuccinate lyase (purB) from Methanocaldococcus jannaschii (strain ATCC 43067 / DSM 2661 / JAL-1 / JCM 10045 / NBRC 100440) (Methanococcus jannaschii).